The following is a 162-amino-acid chain: Putative ankyrin repeat protein RBE_0151 (162 aa).

ANK repeat units lie at residues 49-77 (EKWT…NINI), 81-110 (KGRT…VVAP), and 114-145 (YGWS…EHDK).

This chain is Putative ankyrin repeat protein RBE_0151, found in Rickettsia bellii (strain RML369-C).